The following is a 315-amino-acid chain: Glycerol-3-phosphate dehydrogenase [NAD(P)+] (315 aa).

NADPH contacts are provided by W24, R44, R45, and K92. The sn-glycerol 3-phosphate site is built by K92 and G120. NADPH is bound at residue S124. Residues K175, D228, S238, R239, and N240 each coordinate sn-glycerol 3-phosphate. The Proton acceptor role is filled by K175. R239 lines the NADPH pocket. E265 serves as a coordination point for NADPH.

Belongs to the NAD-dependent glycerol-3-phosphate dehydrogenase family.

The protein localises to the cytoplasm. The enzyme catalyses sn-glycerol 3-phosphate + NAD(+) = dihydroxyacetone phosphate + NADH + H(+). The catalysed reaction is sn-glycerol 3-phosphate + NADP(+) = dihydroxyacetone phosphate + NADPH + H(+). It participates in membrane lipid metabolism; glycerophospholipid metabolism. Catalyzes the reduction of the glycolytic intermediate dihydroxyacetone phosphate (DHAP) to sn-glycerol 3-phosphate (G3P), the key precursor for phospholipid synthesis. The sequence is that of Glycerol-3-phosphate dehydrogenase [NAD(P)+] from Synechococcus sp. (strain JA-2-3B'a(2-13)) (Cyanobacteria bacterium Yellowstone B-Prime).